The following is a 236-amino-acid chain: 6-carboxyhexanoate--CoA ligase (236 aa).

This sequence belongs to the BioW family. Homodimer. It depends on Mg(2+) as a cofactor.

It carries out the reaction heptanedioate + ATP + CoA = 6-carboxyhexanoyl-CoA + AMP + diphosphate. The protein operates within metabolic intermediate metabolism; pimeloyl-CoA biosynthesis; pimeloyl-CoA from pimelate: step 1/1. In terms of biological role, catalyzes the transformation of pimelate into pimeloyl-CoA with concomitant hydrolysis of ATP to AMP. This chain is 6-carboxyhexanoate--CoA ligase, found in Methanococcus aeolicus (strain ATCC BAA-1280 / DSM 17508 / OCM 812 / Nankai-3).